The sequence spans 402 residues: UDP-glucose 6-dehydrogenase (402 aa).

Residues 2–19 (KIAV…GVLL), valine 11, aspartate 29, lysine 34, threonine 83, threonine 118, and glutamate 145 each bind NAD(+). Residues 141-145 (EFLRE), lysine 204, asparagine 208, 249-253 (YNNPS), and glycine 257 contribute to the substrate site. Position 259 (tyrosine 259) interacts with NAD(+). Cysteine 260 acts as the Nucleophile in catalysis. Lysine 263 serves as a coordination point for NAD(+). Substrate is bound at residue lysine 320. Arginine 327 lines the NAD(+) pocket.

Belongs to the UDP-glucose/GDP-mannose dehydrogenase family.

The enzyme catalyses UDP-alpha-D-glucose + 2 NAD(+) + H2O = UDP-alpha-D-glucuronate + 2 NADH + 3 H(+). The protein operates within nucleotide-sugar biosynthesis; UDP-alpha-D-glucuronate biosynthesis; UDP-alpha-D-glucuronate from UDP-alpha-D-glucose: step 1/1. Its function is as follows. Catalyzes the formation of UDP-glucuronic acid which is required for capsular hyaluronic acid synthesis. This is UDP-glucose 6-dehydrogenase (hasB) from Streptococcus pyogenes serotype M3 (strain ATCC BAA-595 / MGAS315).